Here is a 366-residue protein sequence, read N- to C-terminus: Palmitoyltransferase ZDHHC2 (366 aa).

Residues 1 to 15 (MAPSGPGGVRRRCRR) lie on the Cytoplasmic side of the membrane. The chain crosses the membrane as a helical span at residues 16–36 (VLYWIPVVFISLLLGWSYYAY). Residues 37–47 (AIQLCIVSMEN) are Lumenal-facing. Residues 48–68 (IGEQVVCLMAYHLLFAMFVWS) form a helical membrane-spanning segment. Topologically, residues 69–169 (YWKTIFTLPM…NNCVGFSNYK (101 aa)) are cytoplasmic. Residues 126–176 (RYCDRCRLIKPDRCHHCSVCDKCILKMDHHCPWVNNCVGFSNYKFFLLFLA) enclose the DHHC domain. The S-palmitoyl cysteine intermediate role is filled by Cys156. Residues 170 to 190 (FFLLFLAYSLLYCLFIAATDL) traverse the membrane as a helical segment. At 191-207 (QYFIRFWTNGLPDTQAK) the chain is on the lumenal side. Residues 208–228 (FHIMFLFFAAAMFSVSLSSLF) form a helical membrane-spanning segment. The Cytoplasmic segment spans residues 229–366 (GYHCWLVSKN…NPALTMENET (138 aa)). Composition is skewed to polar residues over residues 297–316 (VNQD…TAKN) and 332–349 (SHLL…SNSG). The disordered stretch occupies residues 297-366 (VNQDPEQPST…NPALTMENET (70 aa)). The tract at residues 298–366 (NQDPEQPSTP…NPALTMENET (69 aa)) is mediates localization to plasma membrane and recycling endosomes. The Non-canonical dileucine endocytic signal signature appears at 334-335 (LL). An NPxY-like endocytic signal motif is present at residues 357 to 360 (NPAL).

Belongs to the DHHC palmitoyltransferase family. As to quaternary structure, monomer. Homodimer. The monomeric form has a higher catalytic activity. Autopalmitoylated.

It localises to the postsynaptic density. Its subcellular location is the postsynaptic recycling endosome membrane. The protein resides in the cell membrane. The protein localises to the endoplasmic reticulum membrane. It is found in the golgi apparatus membrane. The catalysed reaction is L-cysteinyl-[protein] + hexadecanoyl-CoA = S-hexadecanoyl-L-cysteinyl-[protein] + CoA. The enzyme catalyses L-cysteinyl-[protein] + tetradecanoyl-CoA = S-tetradecanoyl-L-cysteinyl-[protein] + CoA. It catalyses the reaction L-cysteinyl-[protein] + octadecanoyl-CoA = S-octadecanoyl-L-cysteinyl-[protein] + CoA. In terms of biological role, palmitoyltransferase that catalyzes the addition of palmitate onto various protein substrates and is involved in a variety of cellular processes. Has no stringent fatty acid selectivity and in addition to palmitate can also transfer onto target proteins myristate from tetradecanoyl-CoA and stearate from octadecanoyl-CoA. In the nervous system, plays a role in long term synaptic potentiation by palmitoylating AKAP5 through which it regulates protein trafficking from the dendritic recycling endosomes to the plasma membrane and controls both structural and functional plasticity at excitatory synapses. In dendrites, mediates the palmitoylation of DLG4 when synaptic activity decreases and induces synaptic clustering of DLG4 and associated AMPA-type glutamate receptors. Also mediates the de novo and turnover palmitoylation of RGS7BP, a shuttle for Gi/o-specific GTPase-activating proteins/GAPs, promoting its localization to the plasma membrane in response to the activation of G protein-coupled receptors. Through the localization of these GTPase-activating proteins/GAPs, it also probably plays a role in G protein-coupled receptors signaling in neurons. Also probably plays a role in cell adhesion by palmitoylating CD9 and CD151 to regulate their expression and function. Palmitoylates the endoplasmic reticulum protein CKAP4 and regulates its localization to the plasma membrane. Could also palmitoylate LCK and regulate its localization to the plasma membrane. The chain is Palmitoyltransferase ZDHHC2 from Rattus norvegicus (Rat).